The following is a 214-amino-acid chain: Adenylate kinase (214 aa).

10–15 (GAGKGT) is a binding site for ATP. The tract at residues 30–59 (STGDMLRAAIKAGTELGKQAKAVIDAGQLV) is NMP. AMP-binding positions include Thr-31, Arg-36, 57–59 (QLV), 85–88 (GFPR), and Gln-92. Residues 122 to 159 (GRRAHLPSGRTYHVVYNPPKVEGKDDVTGEDLVVRDDD) are LID. ATP is bound by residues Arg-123 and 132-133 (TY). 2 residues coordinate AMP: Arg-156 and Arg-167. Residue Lys-200 coordinates ATP.

This sequence belongs to the adenylate kinase family. As to quaternary structure, monomer.

It is found in the cytoplasm. It catalyses the reaction AMP + ATP = 2 ADP. Its pathway is purine metabolism; AMP biosynthesis via salvage pathway; AMP from ADP: step 1/1. Catalyzes the reversible transfer of the terminal phosphate group between ATP and AMP. Plays an important role in cellular energy homeostasis and in adenine nucleotide metabolism. This Vibrio vulnificus (strain YJ016) protein is Adenylate kinase.